Reading from the N-terminus, the 55-residue chain is ATP synthase F(0) complex subunit 8 (55 aa).

Residues 10 to 32 form a helical membrane-spanning segment; the sequence is FFIMLASWLTFSLIIQPKLLTFV.

This sequence belongs to the ATPase protein 8 family. As to quaternary structure, component of the ATP synthase complex composed at least of ATP5F1A/subunit alpha, ATP5F1B/subunit beta, ATP5MC1/subunit c (homooctomer), MT-ATP6/subunit a, MT-ATP8/subunit 8, ATP5ME/subunit e, ATP5MF/subunit f, ATP5MG/subunit g, ATP5MK/subunit k, ATP5MJ/subunit j, ATP5F1C/subunit gamma, ATP5F1D/subunit delta, ATP5F1E/subunit epsilon, ATP5PF/subunit F6, ATP5PB/subunit b, ATP5PD/subunit d, ATP5PO/subunit OSCP. ATP synthase complex consists of a soluble F(1) head domain (subunits alpha(3) and beta(3)) - the catalytic core - and a membrane F(0) domain - the membrane proton channel (subunits c, a, 8, e, f, g, k and j). These two domains are linked by a central stalk (subunits gamma, delta, and epsilon) rotating inside the F1 region and a stationary peripheral stalk (subunits F6, b, d, and OSCP).

The protein resides in the mitochondrion membrane. Functionally, subunit 8, of the mitochondrial membrane ATP synthase complex (F(1)F(0) ATP synthase or Complex V) that produces ATP from ADP in the presence of a proton gradient across the membrane which is generated by electron transport complexes of the respiratory chain. ATP synthase complex consist of a soluble F(1) head domain - the catalytic core - and a membrane F(1) domain - the membrane proton channel. These two domains are linked by a central stalk rotating inside the F(1) region and a stationary peripheral stalk. During catalysis, ATP synthesis in the catalytic domain of F(1) is coupled via a rotary mechanism of the central stalk subunits to proton translocation. In vivo, can only synthesize ATP although its ATP hydrolase activity can be activated artificially in vitro. Part of the complex F(0) domain. This is ATP synthase F(0) complex subunit 8 from Loxigilla noctis (Lesser Antillean bullfinch).